We begin with the raw amino-acid sequence, 383 residues long: 2-methylcitrate synthase 2 (383 aa).

The substrate site is built by R73 and H195. Residue H230 is part of the active site. 263–267 (VVMGF) contributes to the CoA binding site. H269 is an active-site residue. Position 278 (R278) interacts with substrate. D320 is an active-site residue. 2 residues coordinate substrate: R345 and R364.

The protein belongs to the citrate synthase family. Homodimer.

It carries out the reaction propanoyl-CoA + oxaloacetate + H2O = (2S,3S)-2-methylcitrate + CoA + H(+). The enzyme catalyses oxaloacetate + acetyl-CoA + H2O = citrate + CoA + H(+). It functions in the pathway organic acid metabolism; propanoate degradation. It participates in carbohydrate metabolism; tricarboxylic acid cycle; isocitrate from oxaloacetate: step 1/2. Functionally, involved in the catabolism of short chain fatty acids (SCFA) via the tricarboxylic acid (TCA)(acetyl degradation route) and via the 2-methylcitrate cycle I (propionate degradation route). Catalyzes the Claisen condensation of propionyl-CoA and oxaloacetate (OAA) to yield 2-methylcitrate (2-MC) and CoA. Also catalyzes the condensation of oxaloacetate with acetyl-CoA but with a lower specificity. In Corynebacterium glutamicum (strain ATCC 13032 / DSM 20300 / JCM 1318 / BCRC 11384 / CCUG 27702 / LMG 3730 / NBRC 12168 / NCIMB 10025 / NRRL B-2784 / 534), this protein is 2-methylcitrate synthase 2 (prpC2).